The following is a 443-amino-acid chain: Mimosinase, chloroplastic (443 aa).

A chloroplast-targeting transit peptide spans 1-43 (MALSSTFLNPLVSSVAVNPQPKITSGKGFRVNCLIRTQQTVIK). Pyridoxal 5'-phosphate contacts are provided by Tyr105, Arg107, Gly135, Met136, Ser254, and Thr256. Lys257 carries the post-translational modification N6-(pyridoxal phosphate)lysine.

Belongs to the trans-sulfuration enzymes family. Forms homodimers. May form homotetramers from two homodimers. Requires pyridoxal 5'-phosphate as cofactor.

The protein localises to the plastid. The protein resides in the chloroplast. The enzyme catalyses L-mimosine + H2O = 3-hydroxy-4H-pyrid-4-one + pyruvate + NH4(+). Catalyzes the degradation of mimosine, which is a toxic secondary metabolite found in all Leucaena and Mimosa species. This Leucaena leucocephala (White popinac) protein is Mimosinase, chloroplastic.